Here is a 182-residue protein sequence, read N- to C-terminus: Ribulose bisphosphate carboxylase small subunit, chloroplastic 6 (182 aa).

The transit peptide at 1 to 41 (MAATMMSKTIISSKQCSKPIAPPKVSINKGFVNTSAAIKNR) directs the protein to the chloroplast.

Belongs to the RuBisCO small chain family. In terms of assembly, heterohexadecamer of 8 large and 8 small subunits.

The protein localises to the plastid. The protein resides in the chloroplast. Its function is as follows. RuBisCO catalyzes two reactions: the carboxylation of D-ribulose 1,5-bisphosphate, the primary event in carbon dioxide fixation, as well as the oxidative fragmentation of the pentose substrate. Both reactions occur simultaneously and in competition at the same active site. Although the small subunit is not catalytic it is essential for maximal activity. The polypeptide is Ribulose bisphosphate carboxylase small subunit, chloroplastic 6 (Acetabularia peniculus (Green alga)).